The chain runs to 180 residues: Crossover junction endodeoxyribonuclease RuvC (180 aa).

Residues aspartate 7, glutamate 66, and aspartate 138 contribute to the active site. Positions 7, 66, and 138 each coordinate Mg(2+).

This sequence belongs to the RuvC family. Homodimer which binds Holliday junction (HJ) DNA. The HJ becomes 2-fold symmetrical on binding to RuvC with unstacked arms; it has a different conformation from HJ DNA in complex with RuvA. In the full resolvosome a probable DNA-RuvA(4)-RuvB(12)-RuvC(2) complex forms which resolves the HJ. It depends on Mg(2+) as a cofactor.

It is found in the cytoplasm. It carries out the reaction Endonucleolytic cleavage at a junction such as a reciprocal single-stranded crossover between two homologous DNA duplexes (Holliday junction).. Its function is as follows. The RuvA-RuvB-RuvC complex processes Holliday junction (HJ) DNA during genetic recombination and DNA repair. Endonuclease that resolves HJ intermediates. Cleaves cruciform DNA by making single-stranded nicks across the HJ at symmetrical positions within the homologous arms, yielding a 5'-phosphate and a 3'-hydroxyl group; requires a central core of homology in the junction. The consensus cleavage sequence is 5'-(A/T)TT(C/G)-3'. Cleavage occurs on the 3'-side of the TT dinucleotide at the point of strand exchange. HJ branch migration catalyzed by RuvA-RuvB allows RuvC to scan DNA until it finds its consensus sequence, where it cleaves and resolves the cruciform DNA. This Paraburkholderia phymatum (strain DSM 17167 / CIP 108236 / LMG 21445 / STM815) (Burkholderia phymatum) protein is Crossover junction endodeoxyribonuclease RuvC.